The sequence spans 1106 residues: MTSGGKVRIYELSRDLGLDNRDVLNAAEKLSIAAKSHSSSISDGEAAKIKALLNSNGKAAGGAKAPAKPDAGNQILSLKKAPSTPSQSAGAPASAPPSRKPEIVAKPAAPASPAKPAPSAPPSRKPEIVAKPAAPASPAKPAPSAPPSRKPEVVAKPAAPASPAKPAPKPVAKPVAKPASAPAPARPAQPLRPQASNRPPQQPSNRPPARPAAKPPVVMSKPTAPPPRPARPGAPAPRRDQNRPAVPMRPPNQQQRPSPQRSGPPRSGAPIRPGAPQRPGMPGRGGAPQQRRGPGGPGGRPPSSLELVGKPIRREPNAPQGRQGGAPSRPGGPGGMRKPVSPGELMQLQKPGSRPTPGDGPRRPPARPGSEAPRRPGEAPNRPNAPTAPPRRPGYRPAAAPGMAGRPRRPDWDDSARLDALRSRSPQKQRQKVHIIGENDDSLAAQTGGFAGGQEALVLQASLARPSKPKNLPGNKGARPVALRRRKKETTRQRQRRRAMELRQAREAKQIRPEMLVVPEGNLTVQELADKLSVESSEIIKSLFFKGIIATVTQTLDLESIEKVSQEFGVPVLQDDIEEAAKKTVEMIEESDLDHLIRRPPVVTVMGHVDHGKTSLLDAIRKTRVAAGEAGGITQHIGAYQVDVDHAGASKKVTFLDTPGHEAFTAMRARGTKVTDVAILVVAADDGVRPQTLEAISHARAAEVPIVVAINKVDKEGAQIDRVKQELSDQSLLAEDWGGDTVMVPVSALKGEGLDKLLEMILLVTEVEDLKANPERMAKGTVVEAHLDKAKGPVATLLVQNGTLRPGDVVAAGPVLGKVRAMVNDSGRRVKEAAPSSAVEVLGFSEVPAAGDEFEVYPDEKAARSVVGDRASEARATRLAQQMASRRVSLTSMSGQASEGELKELNLILKADVQGSVEAILGMLEQLPQGEVQVRVLLSAPGEVTETDVDLAAASGAVIVGFNTTLASGARRAAELAGVDVRDYNVIYKLLEDIQAAMEGLLEPELVESPLGEAEVRAVFSIGKSAVAGCYVTSGSIQRNCKIRVHRGKQLVFSGDLDSLKRMKNDVKEVNTGFECGFGCDRFADWQEGDRVEAFAMVTQRRTLAT.

Composition is skewed to low complexity over residues 57–72 and 81–97; these read GKAA…PDAG and APST…SAPP. 2 disordered regions span residues 57–434 and 466–497; these read GKAA…QKVH and PSKP…RQRR. Composition is skewed to pro residues over residues 113–123 and 138–148; these read PAKPAPSAPPS. The span at 172 to 199 shows a compositional bias: low complexity; that stretch reads AKPVAKPASAPAPARPAQPLRPQASNRP. 2 stretches are compositionally biased toward pro residues: residues 200–214 and 223–235; these read PQQP…PAAK and TAPP…PGAP. Composition is skewed to low complexity over residues 251-292, 319-329, and 395-405; these read PNQQ…QQRR, PQGRQGGAPSR, and YRPAAAPGMAG. Basic and acidic residues predominate over residues 408 to 422; sequence RRPDWDDSARLDALR. Over residues 482–497 the composition is skewed to basic residues; it reads ALRRRKKETTRQRQRR. The tr-type G domain occupies 598–771; the sequence is RRPPVVTVMG…LLVTEVEDLK (174 aa). The tract at residues 607–614 is G1; the sequence is GHVDHGKT. A GTP-binding site is contributed by 607–614; it reads GHVDHGKT. A G2 region spans residues 632-636; the sequence is GITQH. The tract at residues 657-660 is G3; sequence DTPG. Residues 657–661 and 711–714 contribute to the GTP site; these read DTPGH and NKVD. The interval 711–714 is G4; it reads NKVD. Residues 747–749 are G5; the sequence is SAL.

It belongs to the TRAFAC class translation factor GTPase superfamily. Classic translation factor GTPase family. IF-2 subfamily.

The protein resides in the cytoplasm. Functionally, one of the essential components for the initiation of protein synthesis. Protects formylmethionyl-tRNA from spontaneous hydrolysis and promotes its binding to the 30S ribosomal subunits. Also involved in the hydrolysis of GTP during the formation of the 70S ribosomal complex. The sequence is that of Translation initiation factor IF-2 from Synechococcus sp. (strain RCC307).